The following is a 115-amino-acid chain: Mediator of RNA polymerase II transcription subunit 9 (115 aa).

The disordered stretch occupies residues 1–31; the sequence is MATGGTVRPAEEPEEEEEEEDEAVEEEEEED. The span at 12–31 shows a compositional bias: acidic residues; the sequence is EPEEEEEEEDEAVEEEEEED. Residues 31–107 adopt a coiled-coil conformation; that stretch reads DYTFLPLVHD…SELLQKYKSL (77 aa).

The protein belongs to the Mediator complex subunit 9 family. In terms of assembly, component of the Mediator complex.

It is found in the nucleus. Component of the Mediator complex, a coactivator involved in the regulated transcription of nearly all RNA polymerase II-dependent genes. Mediator functions as a bridge to convey information from gene-specific regulatory proteins to the basal RNA polymerase II transcription machinery. Mediator is recruited to promoters by direct interactions with regulatory proteins and serves as a scaffold for the assembly of a functional preinitiation complex with RNA polymerase II and the general transcription factors. This Xenopus laevis (African clawed frog) protein is Mediator of RNA polymerase II transcription subunit 9 (med9).